A 905-amino-acid polypeptide reads, in one-letter code: V-type proton ATPase 116 kDa subunit a 1 (905 aa).

Over 1–424 (MGDYVTPGEE…DAYGIATYRE (424 aa)) the chain is Cytoplasmic. A helical membrane pass occupies residues 425 to 443 (INPAPYTMISFPFLFAVMF). At 444-445 (GD) the chain is on the lumenal side. The chain crosses the membrane as a helical span at residues 446–462 (MGHGAIMLLAALFFILK). The Cytoplasmic portion of the chain corresponds to 463–477 (EKQLEAARIKDEIFQ). A helical transmembrane segment spans residues 478–507 (TFFGGRYVIFLMGAFSIYTGFMYNDVFSKS). Topologically, residues 508–572 (INTFGSSWQN…EGNKLSFLNS (65 aa)) are lumenal. Residues 573–592 (MKMKMSVLFGIAQMTFGVLL) traverse the membrane as a helical segment. Topologically, residues 593-610 (SYQNFIYFKSDLDIKYMF) are cytoplasmic. Residues 611-631 (IPQMIFLSSIFIYLCIQILSK) traverse the membrane as a helical segment. Topologically, residues 632-699 (WLFFGAVGGT…YPGQATIEII (68 aa)) are lumenal. Residues 700 to 719 (LVVLALVQVPIMLFAKPYFL) traverse the membrane as a helical segment. Residues 720 to 788 (YRRDKQQSRY…DVMVYQAIHT (69 aa)) are Cytoplasmic-facing. The helical transmembrane segment at 789–813 (IEFVLGCVSHTASYLRLWALSLAHA) threads the bilayer. The Lumenal segment spans residues 814-834 (QLSDVLWTMVFRNAFVLDGYT). Residues 835–873 (GAIATYILFFIFGSLSVFILVLMEGLSAFLHALRLHWVE) traverse the membrane as a helical segment. Over 874–905 (FQSKFYGGLGYEFAPFSFEKILAEEREAEENL) the chain is Cytoplasmic.

Belongs to the V-ATPase 116 kDa subunit family. In terms of assembly, V-ATPase is a heteromultimeric enzyme made up of two complexes: the ATP-hydrolytic V1 complex and the proton translocation V0 complex. The V1 complex consists of three catalytic AB heterodimers that form a heterohexamer, three peripheral stalks each consisting of EG heterodimers, one central rotor including subunits D and F, and the regulatory subunits C and H. The proton translocation complex V0 consists of the proton transport subunit a, a ring of proteolipid subunits c9c'', rotary subunit d, subunits e and f, and the accessory subunits vah-19/Ac45 and vah-20/PRR. Interacts with V-type proton ATPase subunit C vha-11. As to expression, ubiquitous expression in embryos. Expressed in gonads, intestine, neurons in the head and motoneurons in the ventral cord of larvae and adults. Expressed in the vulvae and spermathecal uterine valves. Weakly expressed in the pharynx. In terms of tissue distribution, specifically expressed in the nervous system.

The protein localises to the membrane. Subunit of the V0 complex of vacuolar(H+)-ATPase (V-ATPase), a multisubunit enzyme composed of a peripheral complex (V1) that hydrolyzes ATP and a membrane integral complex (V0) that translocates protons. V-ATPase is responsible for acidifying and maintaining the pH of intracellular compartments and in some cell types, is targeted to the plasma membrane, where it is responsible for acidifying the extracellular environment. Required for assembly and activity of the vacuolar ATPase. Regulates the size of gut granules during embryonic development. In neurons, required for necrotic cell death by promoting intracellular acidification. Required for cell death induced by hypoxia. Required for acidification of synaptic vesicles and the release of neurotransmitters from adult neurons. This is V-type proton ATPase 116 kDa subunit a 1 from Caenorhabditis elegans.